The following is a 436-amino-acid chain: Putative ankyrin repeat protein FPV245 (436 aa).

ANK repeat units lie at residues 1-30, 34-63, 67-96, 98-119, 123-152, 156-185, 189-218, 222-252, 253-283, and 287-317; these read MSVD…CINI, ETTT…QVNH, KIPN…DTSI, PVPC…KVNT, KSKT…DVNI, NGCY…YANV, YGNS…NISN, NGVT…DTDV, DGYT…DISI, and NGRN…LINE.

This is Putative ankyrin repeat protein FPV245 from Vertebrata (FPV).